We begin with the raw amino-acid sequence, 245 residues long: DNA polymerase sliding clamp 2 (245 aa).

The protein belongs to the PCNA family. In terms of assembly, forms homodimers with PCNA1, which then recruit PCNA3; does not form homotrimers. The heterodimers interact with RfcS homotetramers. Heterotrimer which circularizes head-to-tail (head is at N-terminus, tail is at C-terminus) to form a toroid; DNA passes through its center. Replication factor C (RFC) is required to load the toroid on the DNA. This subunit interacts with DNA polymerase I (dpo1). The heterotrimer also interacts with flap endonuclease 1, DNA ligase and XPF via the other subunits.

One of the sliding clamp subunits that acts as a moving platform for DNA processing. Responsible for tethering the catalytic subunit of DNA polymerase to DNA during high-speed replication. Heterotrimer stimulates the Holliday junction resolvase Hjc. DNA polymerase I, DNA ligase and the flap endonuclease may be constitutively associated with the PCNA heterotrimer forming a scanning complex able to couple DNA synthesis and Okazaki fragment maturation. This is DNA polymerase sliding clamp 2 from Saccharolobus solfataricus (strain ATCC 35092 / DSM 1617 / JCM 11322 / P2) (Sulfolobus solfataricus).